The primary structure comprises 136 residues: Small ribosomal subunit protein bS6 (136 aa).

A disordered region spans residues 96 to 136 (VTEPSALARSGSDAEADRAPADEGSVEAAGAEPGSEAEAEA).

It belongs to the bacterial ribosomal protein bS6 family.

Binds together with bS18 to 16S ribosomal RNA. This Methylococcus capsulatus (strain ATCC 33009 / NCIMB 11132 / Bath) protein is Small ribosomal subunit protein bS6.